A 382-amino-acid chain; its full sequence is MVILLQSLQKSAYGKEPWTLTQTSLETVRSAPANCFKKGPQNIEVMFDKDPENIMVYTVWTYIYYQTLDDTWNKVEGKIDYHGAYYLEGTLKVYYIQFEVDAARFGKTGIWEVHVNEDTIFAPVTSSSPAAGEGATSIDSAPESPANRQLSSTSVSSRKRTPPRTEARRYNRKESSPTTTTTRRQKRQGQRQEDTARRSRSTSRGRQEISRGGNQRRRRRSRETSISPAWGRGGRSRRGPTTRSQSKSLSRSRSRSKSRSRGSSPRGGISPADVGSSVRSLGRKHTGRLERLLEEARDPPVILLRGDANKLKCFRFRAKKKYQDLVKYYSTTWSWVGGTSNDRIGRSRLLLAFSSNTERELFIKIMKLPPGVDWSLGYLDDL.

Positions 1–127 (MVILLQSLQK…DTIFAPVTSS (127 aa)) are transactivation domain. Residues 124-282 (VTSSSPAAGE…DVGSSVRSLG (159 aa)) form a disordered region. Positions 146 to 156 (ANRQLSSTSVS) are enriched in polar residues. Basic and acidic residues predominate over residues 163-175 (PRTEARRYNRKES). Over residues 250–260 (SRSRSRSKSRS) the composition is skewed to basic residues. The span at 261–270 (RGSSPRGGIS) shows a compositional bias: low complexity. A DNA-binding domain region spans residues 298-382 (DPPVILLRGD…DWSLGYLDDL (85 aa)).

This sequence belongs to the papillomaviridae E2 protein family. As to quaternary structure, binds DNA as homodimer. Interacts with protein E1; this interaction greatly increases E1 DNA-binding activity. Interacts with protein L1; this interaction enhances E2-dependent replication and transcription activation. Interacts with protein L2; this interaction inhibits E2 transcriptional activity but not DNA replication function E2. Interacts with protein E7; this interaction inhibits E7 oncogenic activity. Interacts with host TAF1; this interaction modulates E2-dependent transcriptional regulation. Interacts with host BRD4; this interaction mediates E2 transcriptional activation function. Additionally, the interaction with host BRD4 on mitotic chromosomes mediates tethering of the viral genome. Interacts with host TOPBP1; this interaction is required for optimal viral DNA replication. In terms of processing, phosphorylated.

The protein localises to the host nucleus. Plays a role in the initiation of viral DNA replication. A dimer of E2 interacts with a dimer of E1 in order to improve specificity of E1 DNA binding activity. Once the complex recognizes and binds DNA at specific sites, the E2 dimer is removed from DNA. E2 also regulates viral transcription through binding to the E2RE response element (5'-ACCNNNNNNGGT-3') present in multiple copies in the regulatory regions of the viral genome. Activates or represses transcription depending on E2RE's position with regards to proximal promoter elements including the TATA-box. Repression occurs by sterically hindering the assembly of the transcription initiation complex. The protein is Regulatory protein E2 of Homo sapiens (Human).